Consider the following 296-residue polypeptide: Cation-efflux pump FieF (296 aa).

The Cytoplasmic segment spans residues Met1–Ser18. Residues Val19–Ala32 form a helical membrane-spanning segment. The Periplasmic segment spans residues Trp33–Ala43. A helical membrane pass occupies residues Ser44–Ile60. The Zn(2+) site is built by Asp47, Asp51, Asp70, His73, and His77. Residues Ala61 to Leu83 lie on the Cytoplasmic side of the membrane. The chain crosses the membrane as a helical span at residues Ala84–Glu105. The Periplasmic portion of the chain corresponds to Arg106–Gly119. Residues Val120–Lys138 traverse the membrane as a helical segment. The Cytoplasmic portion of the chain corresponds to Arg139 to Asn145. The helical transmembrane segment at Ser146–Leu160 threads the bilayer. Residues His155 and Asp159 each contribute to the Zn(2+) site. Residues Phe161–Ala180 lie on the Periplasmic side of the membrane. The helical transmembrane segment at Asp181–Gly200 threads the bilayer. Topologically, residues Tyr201–Gln296 are cytoplasmic. Positions 234, 235, 250, 263, 285, and 287 each coordinate Zn(2+).

The protein belongs to the cation diffusion facilitator (CDF) transporter (TC 2.A.4) family. FieF subfamily. Homodimer. The subunits are held together in a parallel orientation through zinc binding at the interface of the cytoplasmic domains.

It is found in the cell inner membrane. It carries out the reaction Zn(2+)(in) + H(+)(out) = Zn(2+)(out) + H(+)(in). It catalyses the reaction Cd(2+)(in) + H(+)(out) = Cd(2+)(out) + H(+)(in). The catalysed reaction is Fe(2+)(in) + H(+)(out) = Fe(2+)(out) + H(+)(in). Its activity is regulated as follows. Cytoplasmic zinc binding may trigger movements of two electrically repulsive cytoplasmic domains and reorient transmembrane helices, thereby modulating coordination geometry of the active site for zinc transport. It may modulate activity in response to cytoplasmic metal fluctuations. In terms of biological role, divalent metal cation transporter which exports Zn(2+), Cd(2+) and possibly Fe(2+). Zn(2+)/H(+) antiporter capable of using the proton motive force to remove Zn(2+) from the cytoplasm. May be involved in zinc and iron detoxification by efflux. The protein is Cation-efflux pump FieF of Shewanella oneidensis (strain ATCC 700550 / JCM 31522 / CIP 106686 / LMG 19005 / NCIMB 14063 / MR-1).